A 183-amino-acid polypeptide reads, in one-letter code: UPF0397 protein VFMJ11_1662 (183 aa).

5 helical membrane passes run valine 8 to isoleucine 28, alanine 41 to isoleucine 61, tryptophan 75 to isoleucine 95, phenylalanine 110 to phenylalanine 130, and leucine 147 to asparagine 167.

This sequence belongs to the UPF0397 family.

It is found in the cell membrane. This Aliivibrio fischeri (strain MJ11) (Vibrio fischeri) protein is UPF0397 protein VFMJ11_1662.